Here is a 293-residue protein sequence, read N- to C-terminus: Transcriptional regulator ICP22 homolog (293 aa).

Disordered regions lie at residues 1 to 49 and 175 to 293; these read MPHG…QRID and RFLE…SARR. A compositionally biased stretch (low complexity) spans 21 to 31; sequence TPSTSPLIPSL. The span at 190 to 210 shows a compositional bias: acidic residues; the sequence is EECDVSGDESPSEEEEEDEAS. A compositionally biased stretch (basic residues) spans 272-281; that stretch reads AAKKRRKRQP. A compositionally biased stretch (basic and acidic residues) spans 282–293; that stretch reads PKGERPTKSARR.

This sequence belongs to the herpesviridae ICP22 family.

This is Transcriptional regulator ICP22 homolog (IR4) from Equus caballus (Horse).